The primary structure comprises 82 residues: Immediate early response 3-interacting protein 1 (82 aa).

Helical transmembrane passes span 2-22 (AFTL…VAVL) and 62-82 (VMRV…LLFG).

This sequence belongs to the YOS1 family.

The protein resides in the endoplasmic reticulum membrane. Functionally, regulator of endoplasmic reticulum secretion that acts as a key determinant of brain size. Required for secretion of extracellular matrix proteins. Required for correct brain development by depositing sufficient extracellular matrix proteins for tissue integrity and the proliferation of neural progenitors. Acts as a regulator of the unfolded protein response (UPR). The sequence is that of Immediate early response 3-interacting protein 1 from Xenopus laevis (African clawed frog).